The following is a 249-amino-acid chain: Probable transcriptional regulatory protein Strop_1792 (249 aa).

The protein belongs to the TACO1 family.

The protein localises to the cytoplasm. This is Probable transcriptional regulatory protein Strop_1792 from Salinispora tropica (strain ATCC BAA-916 / DSM 44818 / JCM 13857 / NBRC 105044 / CNB-440).